The following is a 1412-amino-acid chain: MSDFLITESTLEKTPVTASNIRVRKSFAKNKQVIDIPNLIELQKSSYEAFIQKDMDPDRRGDAGLNGVFKSVFPITDFNNTASLEFVSYTLEPAKYDVDECRQRGMTFAAPIKVTLRLIVFDVDEETEARSIRDVKEQEVYLGEIPLMTANGSFIINGTERVVVSQLHRSPGVFFDHDGGKNNASGKLIYSARVIPYRGSWLDAEFDQKDLIHVRIDRRRKFPVTILLKALGYNSEQLLEYFYDLDEVYVKGGKLFRKLDIERMSGQRALTDIVDPKTGEALVKAGRRITRAIVKKIKDLDITELDVLPEDLEGKVLAKPLIDESTGEIIADANAELNAAIIKRSIEAGIESFFMIFFDGLTVGPYLRNTLLVDKVSNKEESLVEIYKRLRPGEPPTLEAATTFFGRLFFDPETYDLSEVGRIKINHRFGISMDECPPSHRTLTHKDILSTIKTLIDLKNGRGVIDDIDHLGNRRVRSVGELLENQYRIGLVRMERAIRERMSLQDVETMMPHDLVNAKPVNAVVKEFFGSSQLSQFMDQTNPLSEITHKRRLSALGPGGLTRDRAGFEVRDVHPTHYGRICPIETPEGPNIGLIASLATYARINNYGFIETPYRKVEAGQVSKDINYLSALEEAGHHIAPAARDEAGNKAIQTATTITRRDGEYEIVDKDKVALMDVSPSQLVSIAASLIPFLEHDDANRALMGSNMQRQAVPLLRSRAPLVGTGVERLVARDSGTSIVAQNDGIVEEVDASRIVIRRFAKGGELGANVDIYNLTKYQRTNQNTCFNQKPIVTVGDKISKGDIIADGPSTELGELALGQNILVAFTPWQGYNFEDSILISERLLKDDVYTSIHIEEFECVARDTKLGKEEITRDIANVGEEALKDLDSSGIIRIGAEVRPGFILVGKVTPKGETQLSPEEKLLRAIFGEKAGDVRDTSLRAPSGVYGTVIDAQVYSREGADRDERLSLIIEEKKRKLEKDLAVEQNVIKNNAISKLRDILVGKITTGVLLNEDGSQKLLNKGQEITEADLETVPFELLNYIPLEQDLEFQVNKIIDNARNQLDAVKLVFNEKIDRLRKGDELPPGVIKMVKVYVAIKRKMQVGDKFAGRHGNKGVVSKVLPAEDMPYLADGTPVDMVLNPLGVPSRMNIGQILEVHLGWAAHNLGKQLGAHLEKWNAENARTEMKDIFSDSDISAKLDKADDASLKSMVQRMKHGIHVGTPVFDGARESDVKGLLAKAQVPSSGKSVLFDGRTGEPFTNPVTVGIMYMLKLHHLVEEKIHARSIGPYSLVSQQPLGGKAQFGGQRLGEMEVWAIEAYGAAYSLQEFLTVKSDDVAGRTRMYESIVKGENILEPGLPESFNVLVKELQSLALNVELMESDILRDQDEDFGDEEVIEVEPVAPVASKDEPEQH.

This sequence belongs to the RNA polymerase beta chain family. In terms of assembly, the RNAP catalytic core consists of 2 alpha, 1 beta, 1 beta' and 1 omega subunit. When a sigma factor is associated with the core the holoenzyme is formed, which can initiate transcription.

It catalyses the reaction RNA(n) + a ribonucleoside 5'-triphosphate = RNA(n+1) + diphosphate. DNA-dependent RNA polymerase catalyzes the transcription of DNA into RNA using the four ribonucleoside triphosphates as substrates. This Bdellovibrio bacteriovorus (strain ATCC 15356 / DSM 50701 / NCIMB 9529 / HD100) protein is DNA-directed RNA polymerase subunit beta.